Reading from the N-terminus, the 385-residue chain is tRNA-specific 2-thiouridylase MnmA (385 aa).

ATP contacts are provided by residues 18–25 (AMSGGVDS) and Leu-44. The active-site Nucleophile is Cys-112. A disulfide bond links Cys-112 and Cys-209. Gly-136 is a binding site for ATP. Residues 159–161 (RDQ) form an interaction with tRNA region. Cys-209 serves as the catalytic Cysteine persulfide intermediate.

The protein belongs to the MnmA/TRMU family.

Its subcellular location is the cytoplasm. It carries out the reaction S-sulfanyl-L-cysteinyl-[protein] + uridine(34) in tRNA + AH2 + ATP = 2-thiouridine(34) in tRNA + L-cysteinyl-[protein] + A + AMP + diphosphate + H(+). In terms of biological role, catalyzes the 2-thiolation of uridine at the wobble position (U34) of tRNA, leading to the formation of s(2)U34. This chain is tRNA-specific 2-thiouridylase MnmA, found in Methylorubrum extorquens (strain PA1) (Methylobacterium extorquens).